The following is a 182-amino-acid chain: Small ribosomal subunit protein uS5 (182 aa).

One can recognise an S5 DRBM domain in the interval 16–79 (FVDRLVHINR…ESAKRGMIYV (64 aa)).

It belongs to the universal ribosomal protein uS5 family. As to quaternary structure, part of the 30S ribosomal subunit. Contacts proteins S4 and S8.

In terms of biological role, with S4 and S12 plays an important role in translational accuracy. Located at the back of the 30S subunit body where it stabilizes the conformation of the head with respect to the body. The chain is Small ribosomal subunit protein uS5 from Bartonella tribocorum (strain CIP 105476 / IBS 506).